The primary structure comprises 503 residues: Maturase K (503 aa).

It belongs to the intron maturase 2 family. MatK subfamily.

The protein resides in the plastid. It is found in the chloroplast. Usually encoded in the trnK tRNA gene intron. Probably assists in splicing its own and other chloroplast group II introns. This chain is Maturase K, found in Syzygium australe (Brush cherry).